The sequence spans 246 residues: Large ribosomal subunit protein uL4 (246 aa).

Residues 37 to 103 are disordered; sequence AAQANRKQDY…TEKDRSLDLN (67 aa). Residues 92–103 show a composition bias toward basic and acidic residues; sequence PKTEKDRSLDLN.

It belongs to the universal ribosomal protein uL4 family. Part of the 50S ribosomal subunit. Interacts weakly with proteins L18e, L24 and L37e. Has been cross-linked to L18e.

Its function is as follows. One of the primary rRNA binding proteins, this protein initially binds near the 5'-end of the 23S rRNA. It is important during the early stages of 50S assembly. In terms of biological role, makes multiple contacts with different domains of the 23S rRNA in the assembled 50S subunit. Functionally, forms part of the polypeptide exit tunnel, in which it helps forms a bend with protein L22. Contacts the macrolide antibiotic spiramycin in the polypeptide exit tunnel. The polypeptide is Large ribosomal subunit protein uL4 (rpl4) (Haloarcula marismortui (strain ATCC 43049 / DSM 3752 / JCM 8966 / VKM B-1809) (Halobacterium marismortui)).